Reading from the N-terminus, the 667-residue chain is UvrABC system protein B (667 aa).

The 172-residue stretch at 24–195 (EGLRRGDRFQ…SSGGVFHLRG (172 aa)) folds into the Helicase ATP-binding domain. 37 to 44 (GVTGSGKT) provides a ligand contact to ATP. The short motif at 90–113 (YYDYYQPEAYIPTKDLYIEKDADI) is the Beta-hairpin element. A Helicase C-terminal domain is found at 428-581 (QVDDFIEEVQ…QLMYNIEHDI (154 aa)). A UVR domain is found at 626-661 (EEYLALLEEEMWRASSELRYEDAAMLRDEMLRIKRE).

Belongs to the UvrB family. Forms a heterotetramer with UvrA during the search for lesions. Interacts with UvrC in an incision complex.

It localises to the cytoplasm. In terms of biological role, the UvrABC repair system catalyzes the recognition and processing of DNA lesions. A damage recognition complex composed of 2 UvrA and 2 UvrB subunits scans DNA for abnormalities. Upon binding of the UvrA(2)B(2) complex to a putative damaged site, the DNA wraps around one UvrB monomer. DNA wrap is dependent on ATP binding by UvrB and probably causes local melting of the DNA helix, facilitating insertion of UvrB beta-hairpin between the DNA strands. Then UvrB probes one DNA strand for the presence of a lesion. If a lesion is found the UvrA subunits dissociate and the UvrB-DNA preincision complex is formed. This complex is subsequently bound by UvrC and the second UvrB is released. If no lesion is found, the DNA wraps around the other UvrB subunit that will check the other stand for damage. The sequence is that of UvrABC system protein B from Kosmotoga olearia (strain ATCC BAA-1733 / DSM 21960 / TBF 19.5.1).